Reading from the N-terminus, the 129-residue chain is MDPESRRLFNVRKVLKGKKPQFKRTCSHKFKKLDDNWRRPRGSQGKQRRKYAAKGALAQVGYGSPAAVKGLHPSGYSDVLISSIAELELVDPSFEAIRIAGKIGAKKKALIIAKAEEAGIKVLNPGRSE.

The protein belongs to the eukaryotic ribosomal protein eL32 family.

This is Large ribosomal subunit protein eL32 (rpl32e) from Methanosarcina mazei (strain ATCC BAA-159 / DSM 3647 / Goe1 / Go1 / JCM 11833 / OCM 88) (Methanosarcina frisia).